The chain runs to 176 residues: Shikimate kinase (176 aa).

Residue 12-17 participates in ATP binding; that stretch reads GSGKST. Ser16 serves as a coordination point for Mg(2+). 3 residues coordinate substrate: Asp34, Arg58, and Gly80. Residue Arg117 coordinates ATP. Arg136 is a substrate binding site. Arg153 contacts ATP.

The protein belongs to the shikimate kinase family. In terms of assembly, monomer. Mg(2+) serves as cofactor.

It localises to the cytoplasm. The enzyme catalyses shikimate + ATP = 3-phosphoshikimate + ADP + H(+). It participates in metabolic intermediate biosynthesis; chorismate biosynthesis; chorismate from D-erythrose 4-phosphate and phosphoenolpyruvate: step 5/7. Catalyzes the specific phosphorylation of the 3-hydroxyl group of shikimic acid using ATP as a cosubstrate. The polypeptide is Shikimate kinase (Mycobacterium bovis (strain ATCC BAA-935 / AF2122/97)).